Consider the following 232-residue polypeptide: tRNA (guanine-N(7)-)-methyltransferase (232 aa).

Glutamate 63, glutamate 88, aspartate 115, and aspartate 137 together coordinate S-adenosyl-L-methionine. The active site involves aspartate 137. Substrate contacts are provided by residues lysine 141, aspartate 173, and 211–214; that span reads TRYE.

This sequence belongs to the class I-like SAM-binding methyltransferase superfamily. TrmB family.

It catalyses the reaction guanosine(46) in tRNA + S-adenosyl-L-methionine = N(7)-methylguanosine(46) in tRNA + S-adenosyl-L-homocysteine. Its pathway is tRNA modification; N(7)-methylguanine-tRNA biosynthesis. Its function is as follows. Catalyzes the formation of N(7)-methylguanine at position 46 (m7G46) in tRNA. The polypeptide is tRNA (guanine-N(7)-)-methyltransferase (Agrobacterium fabrum (strain C58 / ATCC 33970) (Agrobacterium tumefaciens (strain C58))).